Here is a 414-residue protein sequence, read N- to C-terminus: LTYYTPEYKTKDTDILGAFRMTPQPGVPAEEAGAAVAAESSTGTWTTVWTDGLTSLDRYKGRCYDIEPVAGEENQYIVYVAYPLDLFEEGSVTNMFTSIVGNVFGFKALRALRLEDLRIPPAYSKTFQGPPHGIQVERDKLNKYGRPLLGCTIKPKLGLSAKNYGRAVYECLRGGLDFTKDDENVNSQPFMRWRDRFLFVAEALFKSQAETGEIKGHYLNATAGHCEEMMKRAIFARELGAPIVMHDYLTGGFTANTSLAHYCRDNGLLLHIHRAMHAVISRQKIHGMHFRVLAKGLRMSGGDHIHGGTVVGKLEGEREVTLGFVDLLRDDFIEKDRNRGIYFTQDWVSMPGVIPVASGGIHVWHMPALTEILGDESVPQFGGGTLGHPWGIAPGSVANPVAVETSVQLRNEGR.

Substrate is bound by residues Asn102 and Thr152. Catalysis depends on Lys154, which acts as the Proton acceptor. Lys156 is a binding site for substrate. Residues Lys180, Asp182, and Glu183 each contribute to the Mg(2+) site. An N6-carboxylysine modification is found at Lys180. The Proton acceptor role is filled by His273. 3 residues coordinate substrate: Arg274, His306, and Ser358.

This sequence belongs to the RuBisCO large chain family. Type I subfamily. In terms of assembly, heterohexadecamer of 8 large chains and 8 small chains; disulfide-linked. The disulfide link is formed within the large subunit homodimers. Mg(2+) is required as a cofactor. Post-translationally, the disulfide bond which can form in the large chain dimeric partners within the hexadecamer appears to be associated with oxidative stress and protein turnover.

Its subcellular location is the plastid. It localises to the chloroplast. The catalysed reaction is 2 (2R)-3-phosphoglycerate + 2 H(+) = D-ribulose 1,5-bisphosphate + CO2 + H2O. It carries out the reaction D-ribulose 1,5-bisphosphate + O2 = 2-phosphoglycolate + (2R)-3-phosphoglycerate + 2 H(+). Its function is as follows. RuBisCO catalyzes two reactions: the carboxylation of D-ribulose 1,5-bisphosphate, the primary event in carbon dioxide fixation, as well as the oxidative fragmentation of the pentose substrate in the photorespiration process. Both reactions occur simultaneously and in competition at the same active site. The chain is Ribulose bisphosphate carboxylase large chain (rbcL) from Antrophyum reticulatum (Ox-tongue fern).